The sequence spans 207 residues: GTP-binding protein RHO1 (207 aa).

Position 18–25 (18–25) interacts with GTP; the sequence is GDGACGKT. An Effector region motif is present at residues 40 to 48; sequence YVPTVFDNY. GTP-binding positions include 65-69 and 123-126; these read DTAGQ and CKAD. Residues 187 to 207 form a disordered region; the sequence is GKQGKSKAKSDKKKKKKCVVL. The segment covering 190-207 has biased composition (basic residues); that stretch reads GKSKAKSDKKKKKKCVVL. Cysteine 204 bears the Cysteine methyl ester mark. Residue cysteine 204 is the site of S-geranylgeranyl cysteine attachment. Positions 205–207 are cleaved as a propeptide — removed in mature form; that stretch reads VVL.

This sequence belongs to the small GTPase superfamily. Rho family.

The protein resides in the cell membrane. Its function is as follows. Involved in the regulation of actin polarization. Rho proteins are required for distinct steps during polarized hyphal growth of A.gossypii. The chain is GTP-binding protein RHO1 (RHO1) from Eremothecium gossypii (strain ATCC 10895 / CBS 109.51 / FGSC 9923 / NRRL Y-1056) (Yeast).